The following is a 462-amino-acid chain: Putative E3 ubiquitin-protein ligase XBAT35 (462 aa).

ANK repeat units follow at residues 6-35 (SKGELLYQQVSYGNSEGIRALHRDGGDLEW), 39-69 (EGKTPLILACMNSELFDVAKTLIELGSNVNA), and 75-104 (HAGTPLHHAAKRGLENTVKLLLSHGANPLV). 2 disordered regions span residues 277 to 341 (HPPV…GKAS) and 356 to 402 (SSPS…EGER). Residues 304 to 317 (SLHTTMSDPSNLNH) show a composition bias toward polar residues. A compositionally biased stretch (low complexity) spans 319 to 341 (SIGQASSSSGPSSSTAPPSGKAS). The RING-type zinc finger occupies 411–450 (CAICLDAPSEAVCVPCGHVAGCMSCLKEIKSKNWGCPVCR).

It catalyses the reaction S-ubiquitinyl-[E2 ubiquitin-conjugating enzyme]-L-cysteine + [acceptor protein]-L-lysine = [E2 ubiquitin-conjugating enzyme]-L-cysteine + N(6)-ubiquitinyl-[acceptor protein]-L-lysine.. It functions in the pathway protein modification; protein ubiquitination. Its function is as follows. No E3 ubiquitin-protein ligase activity observed when associated with the E2 enzyme UBC8 in vitro. The protein is Putative E3 ubiquitin-protein ligase XBAT35 (XBAT35) of Arabidopsis thaliana (Mouse-ear cress).